Reading from the N-terminus, the 59-residue chain is Large ribosomal subunit protein uL30 (59 aa).

The protein belongs to the universal ribosomal protein uL30 family. In terms of assembly, part of the 50S ribosomal subunit.

The sequence is that of Large ribosomal subunit protein uL30 from Clostridium beijerinckii (strain ATCC 51743 / NCIMB 8052) (Clostridium acetobutylicum).